The primary structure comprises 179 residues: Insulin-like growth factor 2 (179 aa).

Residues 1-24 (MGITAGKSVLVLLAFLAFASCCYA) form the signal peptide. The b stretch occupies residues 25-52 (AYRPSETLCGGELVDTLQFVCGDRGFYF). Disulfide bonds link cysteine 33–cysteine 71, cysteine 45–cysteine 84, and cysteine 70–cysteine 75. The segment at 53 to 64 (SRPSSRINRRSR) is c. Positions 65-85 (GIVEECCFRSCDLALLETYCA) are a. Residues 86–91 (TPAKSE) are d. A propeptide spans 92–179 (RDVSASTTVL…GGASSKASSD (88 aa)) (e peptide). An O-linked (GalNAc...) threonine glycan is attached at threonine 106. O-linked (GalNAc...) serine glycosylation occurs at serine 154. Residues 160–179 (ALPTQDPATHGGASSKASSD) form a disordered region. An O-linked (GalNAc...) threonine glycan is attached at threonine 163.

The protein belongs to the insulin family. In terms of assembly, interacts with MYORG; this interaction is required for IGF2 secretion. Interacts with integrins ITGAV:ITGB3 and ITGA6:ITGB4; integrin-binding is required for IGF2 signaling. Interacts with IGFBP2. Post-translationally, proteolytically processed by PCSK4, proIGF2 is cleaved at Arg-128 and Arg-92 to generate big-IGF2 and mature IGF2.

It localises to the secreted. Its function is as follows. The insulin-like growth factors possess growth-promoting activity. Major fetal growth hormone in mammals. Plays a key role in regulating fetoplacental development. IGF2 is influenced by placental lactogen. Also involved in tissue differentiation. In adults, involved in glucose metabolism in adipose tissue, skeletal muscle and liver. Acts as a ligand for integrin which is required for IGF2 signaling. Positively regulates myogenic transcription factor MYOD1 function by facilitating the recruitment of transcriptional coactivators, thereby controlling muscle terminal differentiation. Inhibits myoblast differentiation and modulates metabolism via increasing the mitochondrial respiration rate. Functionally, preptin undergoes glucose-mediated co-secretion with insulin, and acts as a physiological amplifier of glucose-mediated insulin secretion. Exhibits osteogenic properties by increasing osteoblast mitogenic activity through phosphoactivation of MAPK1 and MAPK3. The protein is Insulin-like growth factor 2 of Bos taurus (Bovine).